The chain runs to 254 residues: Thiazole synthase (254 aa).

K95 (schiff-base intermediate with DXP) is an active-site residue. 1-deoxy-D-xylulose 5-phosphate contacts are provided by residues G156, 182 to 183 (AG), and 204 to 205 (NT).

It belongs to the ThiG family. In terms of assembly, homotetramer. Forms heterodimers with either ThiH or ThiS.

The protein resides in the cytoplasm. The catalysed reaction is [ThiS sulfur-carrier protein]-C-terminal-Gly-aminoethanethioate + 2-iminoacetate + 1-deoxy-D-xylulose 5-phosphate = [ThiS sulfur-carrier protein]-C-terminal Gly-Gly + 2-[(2R,5Z)-2-carboxy-4-methylthiazol-5(2H)-ylidene]ethyl phosphate + 2 H2O + H(+). Its pathway is cofactor biosynthesis; thiamine diphosphate biosynthesis. Its function is as follows. Catalyzes the rearrangement of 1-deoxy-D-xylulose 5-phosphate (DXP) to produce the thiazole phosphate moiety of thiamine. Sulfur is provided by the thiocarboxylate moiety of the carrier protein ThiS. In vitro, sulfur can be provided by H(2)S. In Shewanella baltica (strain OS195), this protein is Thiazole synthase.